The chain runs to 391 residues: GTPase Obg (391 aa).

The region spanning 1 to 159 (MKFVDEASIL…RDLLLELMLL (159 aa)) is the Obg domain. Residues 127-147 (NTRFKSSVNRTPRQKTNGTPG) are disordered. Polar residues predominate over residues 129–145 (RFKSSVNRTPRQKTNGT). Positions 160–333 (ADVGMLGMPN…LCWDVMTFII (174 aa)) constitute an OBG-type G domain. GTP contacts are provided by residues 166-173 (GMPNAGKS), 191-195 (FTTLV), 213-216 (DIPG), 283-286 (NKID), and 314-316 (SAA). Mg(2+)-binding residues include Ser173 and Thr193.

Belongs to the TRAFAC class OBG-HflX-like GTPase superfamily. OBG GTPase family. In terms of assembly, monomer. Mg(2+) is required as a cofactor.

Its subcellular location is the cytoplasm. An essential GTPase which binds GTP, GDP and possibly (p)ppGpp with moderate affinity, with high nucleotide exchange rates and a fairly low GTP hydrolysis rate. Plays a role in control of the cell cycle, stress response, ribosome biogenesis and in those bacteria that undergo differentiation, in morphogenesis control. In Salmonella arizonae (strain ATCC BAA-731 / CDC346-86 / RSK2980), this protein is GTPase Obg.